The chain runs to 503 residues: Ell-associated factor Eaf (503 aa).

2 stretches are compositionally biased toward polar residues: residues 143 to 158 (PGQQISNGSGPSTNVA) and 170 to 189 (ENSTMRITSKTKVSTGSRRN). 2 disordered regions span residues 143–223 (PGQQ…PAWD) and 251–503 (NGSQ…EDDD). Ser-199 is subject to Phosphoserine. Residues 251–264 (NGSQANTSGSSTGS) show a composition bias toward polar residues. The span at 281–296 (GKQRQAPHHGHAKRQQ) shows a compositional bias: basic residues. Residues 297–311 (RSSPPMVQQQPNFGR) are compositionally biased toward polar residues. Residues 312–326 (NSYNGGNNYAQQQQH) are compositionally biased toward low complexity. The span at 382 to 397 (DSSDSDSGSDSDDSTE) shows a compositional bias: acidic residues. Composition is skewed to low complexity over residues 415-435 (MHHQQQQQQQHHLQQQQQQQH) and 484-497 (NDLLQNDLQLSSNS).

Belongs to the EAF family.

Its subcellular location is the nucleus. Functionally, promotes transcriptional elongation by Su(Tpl)/ELL. Essential for development. The chain is Ell-associated factor Eaf from Drosophila ananassae (Fruit fly).